We begin with the raw amino-acid sequence, 257 residues long: Transmembrane protein 101 (257 aa).

The next 8 membrane-spanning stretches (helical) occupy residues 21–40, 52–72, 77–97, 110–130, 139–159, 182–202, 206–226, and 233–253; these read VLLTRCPFWGCFSQLMLYAE, VPYLYFDMGAAVLCASFMSFG, WFALGAALQLAISTYAAYVGG, YSRTVAIIGGFLVLASGAGEL, SLQSTGQVFLGVYLVCVAYSL, LFFVLYGVLALAFLSGYYVTL, ILAVLLPPVMLLIDGNVAYWH, and FWNQMKLLGESVGIFGAAVIL.

The protein localises to the membrane. May activate NF-kappa-B signaling pathways. This is Transmembrane protein 101 (TMEM101) from Bos taurus (Bovine).